Here is a 297-residue protein sequence, read N- to C-terminus: UDP-N-acetylenolpyruvoylglucosamine reductase (297 aa).

The region spanning 24–189 (KVGGNAEIFF…LKAIFKVNKG (166 aa)) is the FAD-binding PCMH-type domain. The active site involves Arg169. Ser218 acts as the Proton donor in catalysis. Glu289 is a catalytic residue.

This sequence belongs to the MurB family. It depends on FAD as a cofactor.

Its subcellular location is the cytoplasm. It catalyses the reaction UDP-N-acetyl-alpha-D-muramate + NADP(+) = UDP-N-acetyl-3-O-(1-carboxyvinyl)-alpha-D-glucosamine + NADPH + H(+). Its pathway is cell wall biogenesis; peptidoglycan biosynthesis. In terms of biological role, cell wall formation. This is UDP-N-acetylenolpyruvoylglucosamine reductase from Rickettsia canadensis (strain McKiel).